Consider the following 197-residue polypeptide: Fucoxanthin-chlorophyll a-c binding protein E, chloroplastic (197 aa).

The N-terminal 31 residues, 1 to 31 (MKFVVFASLLASAARFAPAQQSARTSVATNM), are a transit peptide targeting the chloroplast. The next 3 helical transmembrane spans lie at 73-94 (ISMLAVAGYLVQENGIRLPGDI), 114-134 (ISGAGIAQIVAFIGFLELAVM), and 174-196 (GRAAQMGILALMVHEQLGVSLIP).

This sequence belongs to the fucoxanthin chlorophyll protein family. As to quaternary structure, the LHC complex of chromophytic algae is composed of fucoxanthin, chlorophyll A and C bound non-covalently by fucoxanthin chlorophyll proteins (FCPs). The ratio of the pigments in LHC; fucoxanthin: chlorophyll C: chlorophyll A; (0.6-1): (0.1-0.3): (1).

It localises to the plastid. The protein localises to the chloroplast thylakoid membrane. Functionally, the light-harvesting complex (LHC) functions as a light receptor, it captures and delivers excitation energy to photosystems with which it is closely associated. Energy is transferred from the carotenoid and chlorophyll C (or B) to chlorophyll A and the photosynthetic reaction centers where it is used to synthesize ATP and reducing power. In Phaeodactylum tricornutum (Diatom), this protein is Fucoxanthin-chlorophyll a-c binding protein E, chloroplastic (FCPE).